Consider the following 653-residue polypeptide: Macrolide export ATP-binding/permease protein MacB (653 aa).

Residues 6 to 244 enclose the ABC transporter domain; it reads LQLTRVTRRF…DAASGASGDA (239 aa). 42 to 49 contributes to the ATP binding site; that stretch reads GASGSGKS. 4 consecutive transmembrane segments (helical) span residues 278–298, 526–546, 587–607, and 616–636; these read LLTM…VAIG, LTLL…IGVM, MGGA…SLFV, and AGSI…FGFM.

The protein belongs to the ABC transporter superfamily. Macrolide exporter (TC 3.A.1.122) family. Homodimer.

It localises to the cell inner membrane. In terms of biological role, non-canonical ABC transporter that contains transmembrane domains (TMD), which form a pore in the inner membrane, and an ATP-binding domain (NBD), which is responsible for energy generation. Confers resistance against macrolides. This Burkholderia thailandensis (strain ATCC 700388 / DSM 13276 / CCUG 48851 / CIP 106301 / E264) protein is Macrolide export ATP-binding/permease protein MacB.